The sequence spans 156 residues: Calglandulin (156 aa).

EF-hand domains are found at residues E8–N43, P44–K79, N82–P117, and L118–K153. Residues D131, D133, D135, T137, and E142 each coordinate Ca(2+).

The protein belongs to the calmodulin family. Calglandulin subfamily. As to expression, expressed by the venom gland.

The protein localises to the cytoplasm. In terms of biological role, may be involved in the cellular control mechanism of the secretion of toxins from the gland into the venom. The chain is Calglandulin from Hoplocephalus stephensii (Stephens's banded snake).